We begin with the raw amino-acid sequence, 351 residues long: Uroporphyrinogen decarboxylase (351 aa).

Substrate contacts are provided by residues 32-36, Phe51, Asp82, Tyr157, Ser211, and His326; that span reads RQAGR.

It belongs to the uroporphyrinogen decarboxylase family. In terms of assembly, homodimer.

It localises to the cytoplasm. It carries out the reaction uroporphyrinogen III + 4 H(+) = coproporphyrinogen III + 4 CO2. It participates in porphyrin-containing compound metabolism; protoporphyrin-IX biosynthesis; coproporphyrinogen-III from 5-aminolevulinate: step 4/4. Its function is as follows. Catalyzes the decarboxylation of four acetate groups of uroporphyrinogen III to yield coproporphyrinogen III. In Caulobacter vibrioides (strain ATCC 19089 / CIP 103742 / CB 15) (Caulobacter crescentus), this protein is Uroporphyrinogen decarboxylase.